The sequence spans 124 residues: Fluoride-specific ion channel FluC (124 aa).

4 helical membrane passes run 4–24, 35–55, 60–80, and 95–115; these read VLLV…ISIF, FGTL…YALG, ISPE…TTFS, and WLKA…MVYL. Na(+) contacts are provided by G74 and T77.

Belongs to the fluoride channel Fluc/FEX (TC 1.A.43) family.

The protein resides in the cell inner membrane. It carries out the reaction fluoride(in) = fluoride(out). With respect to regulation, na(+) is not transported, but it plays an essential structural role and its presence is essential for fluoride channel function. Fluoride-specific ion channel. Important for reducing fluoride concentration in the cell, thus reducing its toxicity. This Shewanella putrefaciens (strain CN-32 / ATCC BAA-453) protein is Fluoride-specific ion channel FluC.